Reading from the N-terminus, the 107-residue chain is uncharacterized protein (107 aa).

This is an uncharacterized protein from Schizosaccharomyces pombe (strain 972 / ATCC 24843) (Fission yeast).